The chain runs to 299 residues: Bifunctional protein FolD (299 aa).

NADP(+)-binding positions include 164–166 and Ile234; that span reads GRS.

The protein belongs to the tetrahydrofolate dehydrogenase/cyclohydrolase family. Homodimer.

The catalysed reaction is (6R)-5,10-methylene-5,6,7,8-tetrahydrofolate + NADP(+) = (6R)-5,10-methenyltetrahydrofolate + NADPH. It carries out the reaction (6R)-5,10-methenyltetrahydrofolate + H2O = (6R)-10-formyltetrahydrofolate + H(+). The protein operates within one-carbon metabolism; tetrahydrofolate interconversion. Functionally, catalyzes the oxidation of 5,10-methylenetetrahydrofolate to 5,10-methenyltetrahydrofolate and then the hydrolysis of 5,10-methenyltetrahydrofolate to 10-formyltetrahydrofolate. This chain is Bifunctional protein FolD, found in Christiangramia forsetii (strain DSM 17595 / CGMCC 1.15422 / KT0803) (Gramella forsetii).